The chain runs to 607 residues: Pogo transposable element with KRAB domain (607 aa).

Positions 8-29 (LNLTLKEEQKEEEVEIQELEDG) form a coiled coil. Lysine 13 participates in a covalent cross-link: Glycyl lysine isopeptide (Lys-Gly) (interchain with G-Cter in SUMO2). Residues 47–118 (ALFDEVAIYF…DEWRLQGVTF (72 aa)) form the KRAB domain. The HTH CENPB-type domain maps to 250-323 (AFRGPKNGRF…MRRYDLSLRH (74 aa)). The DDE-1 domain maps to 355–567 (YEVAQMGNAD…ISSESIVQGF (213 aa)). Residue lysine 384 forms a Glycyl lysine isopeptide (Lys-Gly) (interchain with G-Cter in SUMO2) linkage. Residues 588–607 (GELPKEPPKECGPESVAEGD) form a disordered region. A compositionally biased stretch (basic and acidic residues) spans 589–599 (ELPKEPPKECG).

It localises to the nucleus. This Mus musculus (Mouse) protein is Pogo transposable element with KRAB domain (Pogk).